A 469-amino-acid chain; its full sequence is Argininosuccinate lyase (469 aa).

The protein belongs to the lyase 1 family. Argininosuccinate lyase subfamily.

It localises to the cytoplasm. The enzyme catalyses 2-(N(omega)-L-arginino)succinate = fumarate + L-arginine. The protein operates within amino-acid biosynthesis; L-arginine biosynthesis; L-arginine from L-ornithine and carbamoyl phosphate: step 3/3. The protein is Argininosuccinate lyase of Burkholderia cenocepacia (strain ATCC BAA-245 / DSM 16553 / LMG 16656 / NCTC 13227 / J2315 / CF5610) (Burkholderia cepacia (strain J2315)).